The following is a 347-amino-acid chain: UDP-N-acetylenolpyruvoylglucosamine reductase (347 aa).

The FAD-binding PCMH-type domain maps to 24–195 (FDARARVAAR…VAVTFRLPKA (172 aa)). Arginine 171 is an active-site residue. Serine 247 functions as the Proton donor in the catalytic mechanism. Glutamate 343 is a catalytic residue.

It belongs to the MurB family. FAD is required as a cofactor.

It localises to the cytoplasm. It carries out the reaction UDP-N-acetyl-alpha-D-muramate + NADP(+) = UDP-N-acetyl-3-O-(1-carboxyvinyl)-alpha-D-glucosamine + NADPH + H(+). It participates in cell wall biogenesis; peptidoglycan biosynthesis. Cell wall formation. In Burkholderia pseudomallei (strain 668), this protein is UDP-N-acetylenolpyruvoylglucosamine reductase.